The following is a 613-amino-acid chain: Xaa-Pro aminopeptidase ApepP (613 aa).

Substrate contacts are provided by R77 and H388. Mn(2+)-binding residues include D408, D419, and H482. Positions 482, 491, and 517 each coordinate substrate. Mn(2+) contacts are provided by E517 and E531.

This sequence belongs to the peptidase M24B family. Requires Mn(2+) as cofactor. As to expression, detected in gut, brain, testes and ovary.

It is found in the cytoplasm. The catalysed reaction is Release of any N-terminal amino acid, including proline, that is linked to proline, even from a dipeptide or tripeptide.. With respect to regulation, inhibited by the chelating agent EDTA. Divalent metal ions have substrate- and concentration-dependent effects on activity. Activity towards bradykinin is inhibited with increasing Mn(2+) concentration. Activity towards substance P is stimulated by low Mn(2+) concentrations (in the range 10 uM-1 mM) but inhibited by Mn(2+) concentrations in excess of 1 mM. Ca(2+), Mg(2+) and Co(2+) stimulate activity towards substance P at concentrations of 10-100 uM but are inhibitory at concentrations of 1 mM. Zn(2+), Ni(2+) and Cu(2+) strongly inhibit activity towards substance P at concentrations of 1 mM. Functionally, catalyzes the removal of a penultimate prolyl residue from the N-termini of peptides, such as Arg-Pro-Pro. The sequence is that of Xaa-Pro aminopeptidase ApepP from Drosophila melanogaster (Fruit fly).